The following is a 200-amino-acid chain: Male-specific histamine-binding salivary protein (200 aa).

A signal peptide spans 1 to 18; sequence MKVLLLVLGAALCQNADA. The histamine site is built by Ser37, Asp41, Asp56, and Trp59. 2 disulfides stabilise this stretch: Cys65–Cys193 and Cys137–Cys169. Asn79 carries an N-linked (GlcNAc...) asparagine glycan. Histamine-binding residues include Glu97, Tyr115, Phe125, Asp138, Glu154, and Trp156.

Belongs to the calycin superfamily. Histamine-binding salivary protein family. Homodimer; disulcde-linked. In terms of processing, N-glycosylated. As to expression, expressed in salivary glands.

Its subcellular location is the secreted. Its function is as follows. Salivary tick protein that acts by scavenging histamine at the wound site, outcompeting histamine receptors for histamine, thereby overcoming host inflammatory responses. Binds histamine with a high-affinity (Kd=1.2 nM). Contains two binding histamine sites (H and L), that appear to bind histamine with differing affinities. The protein is Male-specific histamine-binding salivary protein of Rhipicephalus appendiculatus (Brown ear tick).